A 728-amino-acid chain; its full sequence is Procollagen-lysine,2-oxoglutarate 5-dioxygenase 1 (728 aa).

A signal peptide spans 1 to 18 (MRSLLLLASLAWLLLAQA). Residues Asn-177, Asn-198, and Asn-539 are each glycosylated (N-linked (GlcNAc...) asparagine). A Fe2OG dioxygenase domain is found at 637–728 (QFDLAFVVRY…RYIAVSFVDP (92 aa)). The Fe cation site is built by His-657 and Asp-659. Residue Asn-687 is glycosylated (N-linked (GlcNAc...) asparagine). His-709 provides a ligand contact to Fe cation. Arg-719 is an active-site residue.

In terms of assembly, homodimer. Identified in a complex with P3H3 and P3H4. Fe(2+) is required as a cofactor. Requires L-ascorbate as cofactor.

It localises to the rough endoplasmic reticulum membrane. The catalysed reaction is L-lysyl-[collagen] + 2-oxoglutarate + O2 = (5R)-5-hydroxy-L-lysyl-[collagen] + succinate + CO2. Functionally, part of a complex composed of PLOD1, P3H3 and P3H4 that catalyzes hydroxylation of lysine residues in collagen alpha chains and is required for normal assembly and cross-linkling of collagen fibrils. Forms hydroxylysine residues in -Xaa-Lys-Gly- sequences in collagens. These hydroxylysines serve as sites of attachment for carbohydrate units and are essential for the stability of the intermolecular collagen cross-links. The sequence is that of Procollagen-lysine,2-oxoglutarate 5-dioxygenase 1 (Plod1) from Rattus norvegicus (Rat).